The following is a 259-amino-acid chain: Probable ABC transporter permease protein RP096 (259 aa).

5 helical membrane passes run 13-35, 49-69, 148-168, 195-215, and 237-257; these read TIKF…SSII, LFIG…SGAV, VIAA…IGVM, PIDV…ISII, and AVVN…ELFF.

This sequence belongs to the MlaE permease family.

The protein localises to the cell inner membrane. In terms of biological role, could be part of an ABC transporter complex. This chain is Probable ABC transporter permease protein RP096, found in Rickettsia prowazekii (strain Madrid E).